A 290-amino-acid polypeptide reads, in one-letter code: Arylamine N-acetyltransferase 2 (290 aa).

The Acyl-thioester intermediate role is filled by Cys68. Residues Thr103 and Gly104 each coordinate CoA. 106–107 lines the substrate pocket; it reads IH. Active-site residues include His107 and Asp122. Positions 208, 214, and 287 each coordinate CoA.

It belongs to the arylamine N-acetyltransferase family.

It is found in the cytoplasm. The catalysed reaction is an arylamine + acetyl-CoA = an N-acetylarylamine + CoA. The enzyme catalyses an N-hydroxyarylamine + acetyl-CoA = an N-acetoxyarylamine + CoA. Its function is as follows. Catalyzes the N- or O-acetylation of various arylamine and heterocyclic amine substrates, and participates in the detoxification of a plethora of hydrazine and arylamine drugs. This is Arylamine N-acetyltransferase 2 (NAT2) from Macaca mulatta (Rhesus macaque).